Consider the following 691-residue polypeptide: Lacticin-481/lactococcin-DR transport/processing ATP-binding protein lcnDR3 (691 aa).

Residues 6 to 130 (QNNEQDCLLA…KKFSGYIITL (125 aa)) enclose the Peptidase C39 domain. Residue C12 is part of the active site. The ABC transmembrane type-1 domain maps to 158–434 (TFLYIFSLFI…IQDVMFEISR (277 aa)). The next 5 membrane-spanning stretches (helical) occupy residues 159-179 (FLYI…SIIL), 189-209 (ITYS…SLLM), 262-284 (GILL…IIYL), 289-311 (FTLT…SLIS), and 385-405 (ICVI…LVSI). The region spanning 464–689 (IILKDISYSY…LLNDSYNSFV (226 aa)) is the ABC transporter domain. 497 to 504 (GKSGSGKS) is an ATP binding site.

It belongs to the ABC transporter superfamily.

Its subcellular location is the cell membrane. Functionally, probably implicated in the export process of the lantibiotic lacticin-481/lactococcin-DR. The protein is Lacticin-481/lactococcin-DR transport/processing ATP-binding protein lcnDR3 (lcnDR3) of Lactococcus lactis subsp. lactis (Streptococcus lactis).